A 789-amino-acid polypeptide reads, in one-letter code: MFPTGIFLMSVLISQMQGRGIVGVEGQELVHPKKLSLLQKRDLERIHDSDTPEEYEEELLYEIKLGRKTLTLHLLKAREFLALNYSETYYNIKREMVTRHPQILDHCFYQGSIIHEFDSAASISTCNGLRGFFRVNDQRYLIEPVKYSDEGDHLVFKYNVKAPYATNYSCEGLNFTKKSTLIDAKIIEEHKVEDYHKEKFIELFVVADEFVYRRNSKPQNKLRKRIWGMVNFVNMIYKALNIRVTLTGMEIWSAGDEIEIVSNLESTLLHFSTWQETVLKKRKDFDHVILLSGKWLYTSMQGIAYPGGICQTLRSCSVVKDLLPDVNIIGNRMAHQLGHSLGMRHDDFPCTCPLGKCVMGAGSIPAIKFSKCSQTQYQQFLKNQKPACILNNPLPEEFNDYPFCGNKKVDEGEECDCGPVQECTNPCCDAHKCVLKPGFTCVEGECCESCQMKKEGVICRPAKNECDISEVCTGYSPECPKDESQANGFPCKNGEGYCFMGLCPTRDDQCAELFSGGAEESHSLCYRMNQKGNRFGYCKNKDNTFVPCEEKDLKCGKIYCTGGRRSAHLGEDKTYNLKNVKQNISIKCKTMFLYHNSRDMGLVNSGTKCGEGMVCSNGECIEMEKAYNSTICSSLCDENDVDDNEPDCQCEEGPIITEWGEALNLTSVSIMVVVLVMVIIGVGLVILLIRYQKCIKMKQVQSSSREIRGIENKVYFPDEHQTRSEPIFTDIYPLHNTAESLERVPSTFSSPHYITLKSVSKDPRGIADPKQNDNMNLNLDSQSDCTRLG.

The first 25 residues, 1–25, serve as a signal peptide directing secretion; sequence MFPTGIFLMSVLISQMQGRGIVGVE. Positions 26–176 are excised as a propeptide; it reads GQELVHPKKL…NYSCEGLNFT (151 aa). Asn-84, Asn-167, and Asn-174 each carry an N-linked (GlcNAc...) asparagine glycan. Over 177 to 668 the chain is Extracellular; it reads KKSTLIDAKI…WGEALNLTSV (492 aa). Residues 199 to 393 enclose the Peptidase M12B domain; the sequence is KFIELFVVAD…QKPACILNNP (195 aa). 4 disulfide bridges follow: Cys-310/Cys-388, Cys-350/Cys-372, Cys-352/Cys-357, and Cys-459/Cys-479. The Disintegrin domain maps to 401–487; that stretch reads YPFCGNKKVD…ECPKDESQAN (87 aa). Residues Asn-583, Asn-628, and Asn-664 are each glycosylated (N-linked (GlcNAc...) asparagine). Residues 669-689 traverse the membrane as a helical segment; the sequence is SIMVVVLVMVIIGVGLVILLI. Over 690–789 the chain is Cytoplasmic; the sequence is RYQKCIKMKQ…DSQSDCTRLG (100 aa). The span at 762–771 shows a compositional bias: basic and acidic residues; the sequence is DPRGIADPKQ. Positions 762-789 are disordered; sequence DPRGIADPKQNDNMNLNLDSQSDCTRLG. Residues 772 to 789 are compositionally biased toward polar residues; the sequence is NDNMNLNLDSQSDCTRLG.

In terms of assembly, interacts with ITM2B in sperm; the interaction increases following capacitation. Interacts with HSPA5 and CANX. Expressed specifically in the caput region of the epididymis (at protein level).

It is found in the membrane. Its function is as follows. Required for normal male fertility via maintenance of epithelial cell morphology in the caput epididymis and subsequently correct epididymis lumen structure required for sperm development. Plays a role in sperm motility, flagella morphology and tyrosine phosphorylation during sperm capacitance. Plays a role in normal expression levels of HSPA5, ITM2B and ADAM2 in sperm both prior to and post-capacitation. This is a non catalytic metalloprotease-like protein. This is Disintegrin and metalloproteinase domain-containing protein 7 from Rattus norvegicus (Rat).